We begin with the raw amino-acid sequence, 204 residues long: LexA repressor (204 aa).

Residues 28 to 48 constitute a DNA-binding region (H-T-H motif); it reads RAEIANRLGFKSANAAEEHLK. Residues Ser121 and Lys158 each act as for autocatalytic cleavage activity in the active site.

This sequence belongs to the peptidase S24 family. As to quaternary structure, homodimer.

The enzyme catalyses Hydrolysis of Ala-|-Gly bond in repressor LexA.. Functionally, represses a number of genes involved in the response to DNA damage (SOS response), including recA and lexA. In the presence of single-stranded DNA, RecA interacts with LexA causing an autocatalytic cleavage which disrupts the DNA-binding part of LexA, leading to derepression of the SOS regulon and eventually DNA repair. The polypeptide is LexA repressor (Shewanella frigidimarina (strain NCIMB 400)).